Consider the following 165-residue polypeptide: MLTYKNILIAVDGSHEAEWAFNKAVDVAKRNDAKLTIVNIIDSRTYSSYEVYDAQFTEKSRSFSEELLKGYQEVATRAGVTNVETRLEFGSPKAIIPKKLASELGVDLIMCGTSGLNAVERFIVGSVSEAIVRHAPCDVLVVRTEEIPEDFQPEVATPEFRKQYS.

The protein belongs to the universal stress protein A family.

It is found in the cytoplasm. The chain is Putative universal stress protein SH1215 from Staphylococcus haemolyticus (strain JCSC1435).